A 460-amino-acid polypeptide reads, in one-letter code: Glutamate--tRNA ligase 2 (460 aa).

Positions 8–18 match the 'HIGH' region motif; it reads PSPTGFLHVGG. Residues 237-241 carry the 'KMSKS' region motif; the sequence is KLSKR. An ATP-binding site is contributed by lysine 240.

Belongs to the class-I aminoacyl-tRNA synthetase family. Glutamate--tRNA ligase type 1 subfamily. As to quaternary structure, monomer.

It is found in the cytoplasm. The catalysed reaction is tRNA(Glu) + L-glutamate + ATP = L-glutamyl-tRNA(Glu) + AMP + diphosphate. Its function is as follows. Catalyzes the attachment of glutamate to tRNA(Glu) in a two-step reaction: glutamate is first activated by ATP to form Glu-AMP and then transferred to the acceptor end of tRNA(Glu). The sequence is that of Glutamate--tRNA ligase 2 from Campylobacter fetus subsp. fetus (strain 82-40).